Here is a 289-residue protein sequence, read N- to C-terminus: Metal-staphylopine import system permease protein CntC (289 aa).

Transmembrane regions (helical) follow at residues 13–33, 77–97, 115–135, 194–214, and 249–269; these read AVIA…APLV, LLYV…LGFL, VMLA…FGMG, IAII…GFSF, and IAIV…QIAI. An ABC transmembrane type-1 domain is found at 73–262; it reads IRPSLLYVFV…IIVMAFNFLS (190 aa).

It belongs to the binding-protein-dependent transport system permease family. The complex is composed of two ATP-binding proteins (CntD and CntF), two transmembrane proteins (CntB and CntC) and a solute-binding protein (CntA).

The protein resides in the cell membrane. With respect to regulation, nickel/cobalt import is reduced in the presence of zinc. In terms of biological role, part of the ABC transporter complex CntABCDF (Opp1) involved in the uptake of metal in complex with the metallophore staphylopine (StP). Involved in the import of divalent metals ions such as nickel, cobalt and zinc. Probably responsible for the translocation of the substrate across the membrane. Plays a major role in nickel/cobalt import in zinc-depleted conditions. Contributes to virulence. Required for full urease activity in vitro. This is Metal-staphylopine import system permease protein CntC from Staphylococcus aureus (strain NCTC 8325 / PS 47).